The following is an 863-amino-acid chain: ATP-dependent helicase Lhr-Core protein 2 (863 aa).

Residues phenylalanine 30, glutamine 37, lysine 60, threonine 61, aspartate 179, glutamate 180, arginine 377, and histidine 380 each contribute to the ATP site. The Helicase ATP-binding domain maps to 41–234 (VIEIHKGENV…FVFGFNDDGT (194 aa)). Positions 179-182 (DEVH) match the DEAH box motif. The Helicase C-terminal domain occupies 275-424 (RLDELIEQHR…RIKIPQNPLD (150 aa)). A WH domain region spans residues 418-512 (IPQNPLDVLV…AIYYMNTGTI (95 aa)). The tract at residues 513–863 (PDEAKIEVYT…KIMAMIGELE (351 aa)) is domain 4.

It belongs to the Lhr helicase family. Lhr-Core subfamily. In terms of assembly, monomer.

The catalysed reaction is ATP + H2O = ADP + phosphate + H(+). Its activity is regulated as follows. Unwinding of dsRNA duplexes is inhibited by AMP-PMP and ATP-gamma-S. A DNA:RNA helicase with a significant strand annealing activity, probably involved in DNA repair and RNA transactions. In vitro has a slow helicase activity with a preference for 3'-overhang duplexes; displaces RNA from 3'-overhang DNA:RNA or RNA:RNA duplexes. 3'-tailed double-stranded (ds)DNA is not unwound. The slow helicase activity on RNA duplexes is ATP-independent. Has strand annealing properties in the absence of ATP; forms 3'-overhang DNA:RNA, 3'-overhang dsRNA and 3'-overhang dsDNA duplexes but not 5'-overhang duplexes. A nucleic acid-dependent ATPase; single-stranded (ss)DNA and RNA are equally stimulatory. Binds ssDNA, RNA, dsDNA and dsRNA duplexes. The chain is ATP-dependent helicase Lhr-Core protein 2 from Thermococcus barophilus (strain DSM 11836 / MP).